We begin with the raw amino-acid sequence, 337 residues long: Ferredoxin--NADP reductase (337 aa).

FAD contacts are provided by Asp-35, Gln-43, Tyr-48, Val-88, Phe-123, Asp-289, and Thr-330.

This sequence belongs to the ferredoxin--NADP reductase type 2 family. In terms of assembly, homodimer. It depends on FAD as a cofactor.

It catalyses the reaction 2 reduced [2Fe-2S]-[ferredoxin] + NADP(+) + H(+) = 2 oxidized [2Fe-2S]-[ferredoxin] + NADPH. In Paramagnetospirillum magneticum (strain ATCC 700264 / AMB-1) (Magnetospirillum magneticum), this protein is Ferredoxin--NADP reductase.